We begin with the raw amino-acid sequence, 301 residues long: tRNA-cytidine(32) 2-sulfurtransferase (301 aa).

The short motif at 55–60 (SGGKDS) is the PP-loop motif element. [4Fe-4S] cluster contacts are provided by Cys130, Cys133, and Cys221.

It belongs to the TtcA family. Homodimer. Requires Mg(2+) as cofactor. [4Fe-4S] cluster serves as cofactor.

Its subcellular location is the cytoplasm. It carries out the reaction cytidine(32) in tRNA + S-sulfanyl-L-cysteinyl-[cysteine desulfurase] + AH2 + ATP = 2-thiocytidine(32) in tRNA + L-cysteinyl-[cysteine desulfurase] + A + AMP + diphosphate + H(+). Its pathway is tRNA modification. In terms of biological role, catalyzes the ATP-dependent 2-thiolation of cytidine in position 32 of tRNA, to form 2-thiocytidine (s(2)C32). The sulfur atoms are provided by the cysteine/cysteine desulfurase (IscS) system. This Acinetobacter baylyi (strain ATCC 33305 / BD413 / ADP1) protein is tRNA-cytidine(32) 2-sulfurtransferase.